A 264-amino-acid polypeptide reads, in one-letter code: MHTLVFCSFKGGTGKTTLSLNVGCNLAQFLGKKVLLADLDPQSNLSSGLGASVRSNQKGLHDIVYTSNDLKSIICETKKDSVDLIPASFLSEQFRELDIHRGPSNNLKLFLNEYCAPFYDICIIDTPPSLGGLTKEAFVAGDKLIACLTPEPFSILGLQKIREFLSSVGKPEEEHILGIALSFWDDRNSTNQMYIDIIESIYKNKLFSTKIRRDISLSRSLLKEDSVANVYPNSRAAEDILKLTHEIANILHIEYERDYSQRTT.

9–16 is a binding site for ATP; the sequence is FKGGTGKT.

Belongs to the ParA family.

Functionally, required for growth within mammalian cells. The sequence is that of Virulence plasmid ParA family protein pGP5-D from Chlamydia trachomatis.